Reading from the N-terminus, the 448-residue chain is RING finger protein 44 (448 aa).

The RING-type; atypical zinc-finger motif lies at 396-437 (CVVCFSDFESRQLLRVLPCNHEFHAKCVDKWLKTNRTCPICR).

This is RING finger protein 44 (rnf44) from Danio rerio (Zebrafish).